The chain runs to 401 residues: Nodulation protein E (401 aa).

Residues 2-400 (DRRVVITGMG…GTNAVLAFKQ (399 aa)) form the Ketosynthase family 3 (KS3) domain. Catalysis depends on for beta-ketoacyl synthase activity residues Cys161, His293, and His330. The chain crosses the membrane as a helical span at residues 328–347 (HAHCIGAASALEMIACVMAI).

It belongs to the thiolase-like superfamily. Beta-ketoacyl-ACP synthases family.

It localises to the cell inner membrane. Proposed to synthesize NOD factor fatty acyl chain. Involved in the synthesis of a highly unsaturated fatty acid moiety, which forms part of a lipo-oligosaccharide that is responsible for host specificity. This chain is Nodulation protein E (nodE), found in Rhizobium meliloti (Ensifer meliloti).